Reading from the N-terminus, the 822-residue chain is Epidermal growth factor receptor kinase substrate 8 (822 aa).

Polar residues-rich tracts occupy residues 1–10 (MNGHISNHPS) and 17–30 (SQMN…TFSQ). The interval 1–39 (MNGHISNHPSSFGMYPSQMNGYGSSPTFSQTDREHGSKT) is disordered. Phosphoserine is present on serine 58. Residues 64–194 (QYRVEHLTTF…SDSKGGKQKR (131 aa)) enclose the PTB domain. Disordered stretches follow at residues 202–225 (ISNA…GTVT) and 298–320 (SKRK…TLRA). Residues 208–221 (SIPPPPRAPAPAPP) are compositionally biased toward pro residues. Threonine 223 carries the post-translational modification Phosphothreonine. Residues 299–309 (KRKKNKKGKRK) are compositionally biased toward basic residues. Phosphothreonine is present on threonine 317. A Phosphoserine modification is found at serine 476. One can recognise an SH3 domain in the interval 531-590 (QPKKYAKSKYDFVARNNSELSVLKDDILEILDDRKQWWKVRNASGDSGFVPNNILDIVRP). The disordered stretch occupies residues 612–689 (EYGPRPADTP…VDRRKSQMEE (78 aa)). Positions 618–645 (ADTPPAPSPPPTPAPVPVPLPPSTPAPV) are enriched in pro residues. At serine 625 the chain carries Phosphoserine. Threonine 629 carries the post-translational modification Phosphothreonine; by MAPK. The effector region stretch occupies residues 649–822 (KVPANITRQN…VESFDEGSSH (174 aa)). Serine 659, serine 662, and serine 685 each carry phosphoserine. The segment covering 671–687 (DSQRHKQLPVDRRKSQM) has biased composition (basic and acidic residues). Residues 680-698 (VDRRKSQMEEVQDELIHRL) form an amphipathic helix region. Helix bundle stretches follow at residues 718–738 (VINI…QSKG), 752–757 (GAQLFS), 762–767 (ELRTVC), and 766–785 (VCPE…AALE). Positions 787–822 (SSGSSELQEIMRRRQEKISAAASDSGVESFDEGSSH) are disordered. A phosphoserine mark is found at serine 811 and serine 815.

It belongs to the EPS8 family. Homodimer. Part of a complex consisting of ABI1, EPS8 and SOS1. Interacts with MYO15A and WHRN. Interacts with LANCL1. Interacts with EGFR; mediates EPS8 phosphorylation. Interacts with BAIAP2. Interacts with SHB. Ubiquitinated by the SCF(FBXW5) E3 ubiquitin-protein ligase complex during G2 phase, leading to its transient degradation and subsequent cell shape changes required to allow mitotic progression. Reappears at the midzone of dividing cells. Post-translationally, phosphorylation at Ser-625 and Thr-629 by MAPK following BDNF treatment promotes removal from actin and filopodia formation. Phosphorylated by several receptor tyrosine kinases. Expressed in all tissues analyzed, including heart, brain, placenta, lung, liver, skeletal muscle, kidney and pancreas. Expressed in all epithelial and fibroblastic lines examined and in some, but not all, hematopoietic cells.

The protein resides in the cytoplasm. Its subcellular location is the cell cortex. It is found in the cell projection. It localises to the ruffle membrane. The protein localises to the growth cone. The protein resides in the stereocilium. Its subcellular location is the synapse. It is found in the synaptosome. Signaling adapter that controls various cellular protrusions by regulating actin cytoskeleton dynamics and architecture. Depending on its association with other signal transducers, can regulate different processes. Together with SOS1 and ABI1, forms a trimeric complex that participates in transduction of signals from Ras to Rac by activating the Rac-specific guanine nucleotide exchange factor (GEF) activity. Acts as a direct regulator of actin dynamics by binding actin filaments and has both barbed-end actin filament capping and actin bundling activities depending on the context. Displays barbed-end actin capping activity when associated with ABI1, thereby regulating actin-based motility process: capping activity is auto-inhibited and inhibition is relieved upon ABI1 interaction. Also shows actin bundling activity when associated with BAIAP2, enhancing BAIAP2-dependent membrane extensions and promoting filopodial protrusions. Involved in the regulation of processes such as axonal filopodia growth, stereocilia length, dendritic cell migration and cancer cell migration and invasion. Acts as a regulator of axonal filopodia formation in neurons: in the absence of neurotrophic factors, negatively regulates axonal filopodia formation via actin-capping activity. In contrast, it is phosphorylated in the presence of BDNF leading to inhibition of its actin-capping activity and stimulation of filopodia formation. Component of a complex with WHRN and MYO15A that localizes at stereocilia tips and is required for elongation of the stereocilia actin core. Indirectly involved in cell cycle progression; its degradation following ubiquitination being required during G2 phase to promote cell shape changes. In Homo sapiens (Human), this protein is Epidermal growth factor receptor kinase substrate 8 (EPS8).